The following is a 594-amino-acid chain: Segmentation polarity homeobox protein engrailed (594 aa).

7 disordered regions span residues M1–E64, I76–I127, K141–G164, H198–A217, I231–S299, A387–N458, and D474–T501. Low complexity predominate over residues S22–P60. Residues P92–H112 show a composition bias toward basic residues. Over residues H151–G164 the composition is skewed to pro residues. The span at L237 to T247 shows a compositional bias: polar residues. Low complexity-rich tracts occupy residues A278 to S299 and A387 to A402. Polar residues-rich tracts occupy residues S426 to D436 and E448 to N458. Residues Q487–P499 are compositionally biased toward basic and acidic residues. A DNA-binding region (homeobox) is located at residues E496–S555.

This sequence belongs to the engrailed homeobox family.

Its subcellular location is the nucleus. Its function is as follows. This protein specifies the body segmentation pattern. It is required for the development of the central nervous system. Transcriptional regulator that repress activated promoters. The polypeptide is Segmentation polarity homeobox protein engrailed (en) (Anopheles gambiae (African malaria mosquito)).